The chain runs to 303 residues: Elongation factor Ts (303 aa).

The tract at residues 80 to 83 is involved in Mg(2+) ion dislocation from EF-Tu; it reads TDFV.

This sequence belongs to the EF-Ts family.

The protein resides in the cytoplasm. Its function is as follows. Associates with the EF-Tu.GDP complex and induces the exchange of GDP to GTP. It remains bound to the aminoacyl-tRNA.EF-Tu.GTP complex up to the GTP hydrolysis stage on the ribosome. This Clostridium perfringens (strain SM101 / Type A) protein is Elongation factor Ts.